The chain runs to 641 residues: Pumilio homolog 24 (641 aa).

The tract at residues 1 to 82 is disordered; sequence MSSKGLKPQK…LTEARKKKRK (82 aa). Residues 9–404 form the PUM-HD domain; the sequence is QKSTKRKDTD…RPLLQLLHPN (396 aa). 2 stretches are compositionally biased toward basic and acidic residues: residues 14-27 and 67-76; these read RKDT…DSLK and RVQAKELTEA. Pumilio repeat units follow at residues 118–153, 154–189, 190–225, 303–340, and 341–378; these read KMKG…VLFT, ELQP…ACIS, SLRG…ELLA, QLLT…KIIK, and AMKE…IIVR. Residues 427–468 are disordered; sequence MDKSETSSKTKDTDGNEIGEETKDEQEDTVAEHSDHEENVTA. The segment covering 428 to 440 has biased composition (basic and acidic residues); the sequence is DKSETSSKTKDTD. Residues 441–455 show a composition bias toward acidic residues; it reads GNEIGEETKDEQEDT. Over residues 456–468 the composition is skewed to basic and acidic residues; it reads VAEHSDHEENVTA.

It is found in the nucleus. The protein resides in the nucleolus. Sequence-specific RNA-binding protein that regulates translation and mRNA stability by binding the 3'-UTR of target mRNAs. This chain is Pumilio homolog 24 (APUM24), found in Arabidopsis thaliana (Mouse-ear cress).